The chain runs to 79 residues: Protein S100-G (79 aa).

N-acetylserine is present on Ser-2. 2 EF-hand domains span residues 13-48 (IFEKYAAKEGDPDQLSKDELKLLIQAEFPSLLKGPN) and 45-79 (KGPNTLDDLFQELDKNGDGEVSFEEFQVLVKKISQ). Ca(2+)-binding residues include Gln-26 and Glu-31. Ser-42 is modified (phosphoserine). Positions 58, 60, 62, 64, and 69 each coordinate Ca(2+).

Belongs to the S-100 family.

This Homo sapiens (Human) protein is Protein S100-G (S100G).